The sequence spans 530 residues: Phosphoenolpyruvate carboxykinase (ATP) (530 aa).

Substrate contacts are provided by Arg-60, Tyr-195, and Lys-201. ATP is bound by residues Lys-201, His-221, and 237–245 (GLSGTGKTT). Residues Lys-201 and His-221 each coordinate Mn(2+). Residue Asp-258 coordinates Mn(2+). Residues Glu-286, Arg-324, 443–444 (RI), and Ser-449 contribute to the ATP site. Arg-324 is a binding site for substrate.

The protein belongs to the phosphoenolpyruvate carboxykinase (ATP) family. Requires Mn(2+) as cofactor.

The protein resides in the cytoplasm. It carries out the reaction oxaloacetate + ATP = phosphoenolpyruvate + ADP + CO2. Its pathway is carbohydrate biosynthesis; gluconeogenesis. Functionally, involved in the gluconeogenesis. Catalyzes the conversion of oxaloacetate (OAA) to phosphoenolpyruvate (PEP) through direct phosphoryl transfer between the nucleoside triphosphate and OAA. The sequence is that of Phosphoenolpyruvate carboxykinase (ATP) from Pelobacter propionicus (strain DSM 2379 / NBRC 103807 / OttBd1).